A 116-amino-acid polypeptide reads, in one-letter code: UPF0329 protein ECU05_1650 (116 aa).

This sequence belongs to the UPF0329 family.

This is UPF0329 protein ECU05_1650 from Encephalitozoon cuniculi (strain GB-M1) (Microsporidian parasite).